The primary structure comprises 413 residues: Arginine biosynthesis bifunctional protein ArgJ (413 aa).

Thr158, Lys184, Thr195, Glu285, Asn408, and Ser413 together coordinate substrate. Thr195 serves as the catalytic Nucleophile.

This sequence belongs to the ArgJ family. As to quaternary structure, heterotetramer of two alpha and two beta chains.

The protein resides in the cytoplasm. It catalyses the reaction N(2)-acetyl-L-ornithine + L-glutamate = N-acetyl-L-glutamate + L-ornithine. It carries out the reaction L-glutamate + acetyl-CoA = N-acetyl-L-glutamate + CoA + H(+). It participates in amino-acid biosynthesis; L-arginine biosynthesis; L-ornithine and N-acetyl-L-glutamate from L-glutamate and N(2)-acetyl-L-ornithine (cyclic): step 1/1. It functions in the pathway amino-acid biosynthesis; L-arginine biosynthesis; N(2)-acetyl-L-ornithine from L-glutamate: step 1/4. Its function is as follows. Catalyzes two activities which are involved in the cyclic version of arginine biosynthesis: the synthesis of N-acetylglutamate from glutamate and acetyl-CoA as the acetyl donor, and of ornithine by transacetylation between N(2)-acetylornithine and glutamate. The polypeptide is Arginine biosynthesis bifunctional protein ArgJ (Bradyrhizobium diazoefficiens (strain JCM 10833 / BCRC 13528 / IAM 13628 / NBRC 14792 / USDA 110)).